Consider the following 189-residue polypeptide: Probable nicotinate-nucleotide adenylyltransferase (189 aa).

Belongs to the NadD family.

The catalysed reaction is nicotinate beta-D-ribonucleotide + ATP + H(+) = deamido-NAD(+) + diphosphate. Its pathway is cofactor biosynthesis; NAD(+) biosynthesis; deamido-NAD(+) from nicotinate D-ribonucleotide: step 1/1. Catalyzes the reversible adenylation of nicotinate mononucleotide (NaMN) to nicotinic acid adenine dinucleotide (NaAD). The protein is Probable nicotinate-nucleotide adenylyltransferase of Bacillus cytotoxicus (strain DSM 22905 / CIP 110041 / 391-98 / NVH 391-98).